A 482-amino-acid chain; its full sequence is Glutamyl-tRNA(Gln) amidotransferase subunit A (482 aa).

Residues Lys-74 and Ser-149 each act as charge relay system in the active site. Ser-173 functions as the Acyl-ester intermediate in the catalytic mechanism.

The protein belongs to the amidase family. GatA subfamily. In terms of assembly, heterotrimer of A, B and C subunits.

It carries out the reaction L-glutamyl-tRNA(Gln) + L-glutamine + ATP + H2O = L-glutaminyl-tRNA(Gln) + L-glutamate + ADP + phosphate + H(+). In terms of biological role, allows the formation of correctly charged Gln-tRNA(Gln) through the transamidation of misacylated Glu-tRNA(Gln) in organisms which lack glutaminyl-tRNA synthetase. The reaction takes place in the presence of glutamine and ATP through an activated gamma-phospho-Glu-tRNA(Gln). The polypeptide is Glutamyl-tRNA(Gln) amidotransferase subunit A (Prochlorococcus marinus (strain AS9601)).